We begin with the raw amino-acid sequence, 386 residues long: Epoxyqueuosine reductase (386 aa).

Residues Arg57, Cys97, Asp134, 139–141 (SDR), Ser152, Asn155, Ile158, and Leu169 each bind cob(II)alamin. The Proton donor role is filled by Asp134. One can recognise a 4Fe-4S ferredoxin-type domain in the interval 178–208 (FEPDVPIEDMCGSCTKCLDACPTGALVNPGQ). [4Fe-4S] cluster contacts are provided by Cys188, Cys191, Cys194, Cys198, and Cys214. Ser216 is a binding site for cob(II)alamin. 2 residues coordinate tRNA: Gln220 and Lys222. Positions 240, 243, and 247 each coordinate [4Fe-4S] cluster. Position 240–241 (240–241 (CD)) interacts with cob(II)alamin. Asn280, Arg281, Arg295, Lys297, and Lys298 together coordinate tRNA. One copy of the HEAT-like PBS-type repeat lies at 333-357 (RGTAAWAIGKIGDPAYAEELEKALE).

This sequence belongs to the QueG family. As to quaternary structure, monomer. The cofactor is cob(II)alamin. It depends on [4Fe-4S] cluster as a cofactor.

Its subcellular location is the cytoplasm. The catalysed reaction is epoxyqueuosine(34) in tRNA + AH2 = queuosine(34) in tRNA + A + H2O. It participates in tRNA modification; tRNA-queuosine biosynthesis. Its function is as follows. Catalyzes the conversion of epoxyqueuosine (oQ) to queuosine (Q), which is a hypermodified base found in the wobble positions of tRNA(Asp), tRNA(Asn), tRNA(His) and tRNA(Tyr). The sequence is that of Epoxyqueuosine reductase from Bacillus subtilis (strain 168).